Reading from the N-terminus, the 356-residue chain is Syntaxin-7A (356 aa).

Over 1–333 (MYNNNNNFGG…NQKSSRNKMC (333 aa)) the chain is Cytoplasmic. 2 stretches are compositionally biased toward low complexity: residues 32–74 (NNNN…FDNN) and 207–224 (NNNS…NNQQ). 2 disordered regions span residues 32-88 (NNNN…NSDY) and 187-247 (EKTT…RRQQ). A compositionally biased stretch (basic and acidic residues) spans 233–244 (EDEHQSLMESSR). In terms of domain architecture, t-SNARE coiled-coil homology spans 259–321 (NSIIQERDEG…KEGVNHLREA (63 aa)). Residues 334–354 (WIVLILLIVCAVLGVILFFTL) form a helical; Anchor for type IV membrane protein membrane-spanning segment. Residues 355 to 356 (RK) are Vesicular-facing.

It belongs to the syntaxin family. In terms of assembly, component of the SNARE complex composed of syn7A, syn8A, vamp7A and vti1A. Interacts with nsfA, snpA and snpC.

Its subcellular location is the endosome membrane. Involved in the targeting and/or fusion of transport vesicles to their target membrane during transport of proteins from the early endosome to the lysosome. Required for fusion of late endosomes with lysosomes and homotypic lysosomal fusion. May be involved in protein trafficking from the plasma membrane to the early endosome (EE) as well as in homotypic fusion of endocytic organelles. The protein is Syntaxin-7A of Dictyostelium discoideum (Social amoeba).